The following is a 367-amino-acid chain: Flagellar P-ring protein (367 aa).

Positions 1–24 (MLRPIITLLCLTLMLCTAAGPAGA) are cleaved as a signal peptide.

The protein belongs to the FlgI family. The basal body constitutes a major portion of the flagellar organelle and consists of four rings (L,P,S, and M) mounted on a central rod.

It is found in the periplasm. The protein resides in the bacterial flagellum basal body. Functionally, assembles around the rod to form the L-ring and probably protects the motor/basal body from shearing forces during rotation. This chain is Flagellar P-ring protein, found in Syntrophotalea carbinolica (strain DSM 2380 / NBRC 103641 / GraBd1) (Pelobacter carbinolicus).